A 234-amino-acid polypeptide reads, in one-letter code: 7-cyano-7-deazaguanine synthase (234 aa).

7–17 (LSGGLDSAVCM) is an ATP binding site. Cys197, Cys208, Cys211, and Cys214 together coordinate Zn(2+).

The protein belongs to the QueC family. The cofactor is Zn(2+).

The enzyme catalyses 7-carboxy-7-deazaguanine + NH4(+) + ATP = 7-cyano-7-deazaguanine + ADP + phosphate + H2O + H(+). The protein operates within purine metabolism; 7-cyano-7-deazaguanine biosynthesis. Catalyzes the ATP-dependent conversion of 7-carboxy-7-deazaguanine (CDG) to 7-cyano-7-deazaguanine (preQ(0)). The chain is 7-cyano-7-deazaguanine synthase from Methanococcus aeolicus (strain ATCC BAA-1280 / DSM 17508 / OCM 812 / Nankai-3).